Consider the following 546-residue polypeptide: Apolipoprotein N-acyltransferase 1 (546 aa).

The next 7 helical transmembrane spans lie at 14–34, 41–61, 62–82, 85–105, 122–142, 151–171, and 194–214; these read FLLFVLAVSLFALSHPNPLLP, AYGALAPLFLLVRWASGFAVV, FWGGAYGAFSYGAFSYWLFVF, VALCVVAGFSALFLAALCLAL, LVWLGYEYAKTLGFLGFPYGV, LPLIQVASVFGVWVVSALVVF, and FLSAAYSHWVSALVWVGLCGF. One can recognise a CN hydrolase domain in the interval 233 to 502; sequence AKVALVQPNG…PGVLVADVPI (270 aa). E280 (proton acceptor) is an active-site residue. K361 is an active-site residue. C413 functions as the Nucleophile in the catalytic mechanism. A helical membrane pass occupies residues 514-534; that stretch reads GDALGVFFCVASLFILIAGGV.

It belongs to the CN hydrolase family. Apolipoprotein N-acyltransferase subfamily.

It localises to the cell inner membrane. The catalysed reaction is N-terminal S-1,2-diacyl-sn-glyceryl-L-cysteinyl-[lipoprotein] + a glycerophospholipid = N-acyl-S-1,2-diacyl-sn-glyceryl-L-cysteinyl-[lipoprotein] + a 2-acyl-sn-glycero-3-phospholipid + H(+). The protein operates within protein modification; lipoprotein biosynthesis (N-acyl transfer). Its function is as follows. Catalyzes the phospholipid dependent N-acylation of the N-terminal cysteine of apolipoprotein, the last step in lipoprotein maturation. This chain is Apolipoprotein N-acyltransferase 1, found in Treponema pallidum (strain Nichols).